Here is a 121-residue protein sequence, read N- to C-terminus: ATP synthase epsilon chain (121 aa).

The protein belongs to the ATPase epsilon chain family. F-type ATPases have 2 components, CF(1) - the catalytic core - and CF(0) - the membrane proton channel. CF(1) has five subunits: alpha(3), beta(3), gamma(1), delta(1), epsilon(1). CF(0) has three main subunits: a, b and c.

Its subcellular location is the cell membrane. In terms of biological role, produces ATP from ADP in the presence of a proton gradient across the membrane. This chain is ATP synthase epsilon chain, found in Mycobacterium sp. (strain JLS).